Reading from the N-terminus, the 161-residue chain is UPF0262 protein Meso_0189 (161 aa).

Belongs to the UPF0262 family.

This is UPF0262 protein Meso_0189 from Chelativorans sp. (strain BNC1).